A 442-amino-acid polypeptide reads, in one-letter code: NADH-quinone oxidoreductase subunit D (442 aa).

The protein belongs to the complex I 49 kDa subunit family. As to quaternary structure, NDH-1 is composed of 14 different subunits. Subunits NuoB, C, D, E, F, and G constitute the peripheral sector of the complex.

Its subcellular location is the cell membrane. It carries out the reaction a quinone + NADH + 5 H(+)(in) = a quinol + NAD(+) + 4 H(+)(out). Functionally, NDH-1 shuttles electrons from NADH, via FMN and iron-sulfur (Fe-S) centers, to quinones in the respiratory chain. The immediate electron acceptor for the enzyme in this species is believed to be a menaquinone. Couples the redox reaction to proton translocation (for every two electrons transferred, four hydrogen ions are translocated across the cytoplasmic membrane), and thus conserves the redox energy in a proton gradient. This chain is NADH-quinone oxidoreductase subunit D, found in Mycolicibacterium vanbaalenii (strain DSM 7251 / JCM 13017 / BCRC 16820 / KCTC 9966 / NRRL B-24157 / PYR-1) (Mycobacterium vanbaalenii).